A 237-amino-acid polypeptide reads, in one-letter code: Putative exosome complex component rrp40 (237 aa).

In terms of domain architecture, S1 motif spans 67–137 (EDMVIGTIIE…EPEVVCLSQK (71 aa)).

This sequence belongs to the RRP40 family. As to quaternary structure, component of the RNA exosome complex.

The protein localises to the cytoplasm. It is found in the nucleus. The protein resides in the nucleolus. Functionally, non-catalytic component of the RNA exosome complex which has 3'-&gt;5' exoribonuclease activity and participates in a multitude of cellular RNA processing and degradation events. The chain is Putative exosome complex component rrp40 (exosc3) from Dictyostelium discoideum (Social amoeba).